Consider the following 504-residue polypeptide: Anaerobic nitric oxide reductase transcription regulator NorR (504 aa).

Aspartate 57 carries the 4-aspartylphosphate modification. In terms of domain architecture, Sigma-54 factor interaction spans 187 to 416 (MIGLSPGMTQ…LEHAIHRAVV (230 aa)). Residues 215 to 222 (GETGTGKE) and 278 to 287 (ADNGTLFLDE) each bind ATP. Positions 479 to 498 (WAACARMLETDVANLHRLAK) form a DNA-binding region, H-T-H motif.

It functions in the pathway nitrogen metabolism; nitric oxide reduction. In terms of biological role, required for the expression of anaerobic nitric oxide (NO) reductase, acts as a transcriptional activator for at least the norVW operon. Activation also requires sigma-54. The sequence is that of Anaerobic nitric oxide reductase transcription regulator NorR from Escherichia coli O17:K52:H18 (strain UMN026 / ExPEC).